A 278-amino-acid chain; its full sequence is Orotidine 5'-phosphate decarboxylase (278 aa).

Substrate-binding positions include Asp40, 62 to 64 (KTH), 93 to 102 (DRKFADIGNT), Tyr223, and Arg242. Catalysis depends on Lys95, which acts as the Proton donor.

Belongs to the OMP decarboxylase family.

The catalysed reaction is orotidine 5'-phosphate + H(+) = UMP + CO2. It participates in pyrimidine metabolism; UMP biosynthesis via de novo pathway; UMP from orotate: step 2/2. The protein is Orotidine 5'-phosphate decarboxylase (URA1) of Schizophyllum commune (Split gill fungus).